The sequence spans 716 residues: MSQNLQETSQAYPRHRPGSHAGPKSLKVTPRATMYTFLPDNFSPAKPKPTKELRPLLCSAVLGLLLVLAAVVAWCYYSASLRKAERLRAELLDLNRGGFSIRNQKGEQVFRLAFRSGALDLDSCSRDGALLGCSRAADGRPLHFFIQTVRPKDTVMCYRVRWEEAVPGRAVEHAMFLGDAAAHWYGGAEMRTQHWPIRLDGQQEPQPFVTSDVYSSDAAFGGILERYWLSSRAAAIKVNDSVPFHLGWNSTERSMRLQARYHDTSYKPPAGRTAAPELSYRVCVGSDVTSIHKYMVRRYFNKPSRVPASEAFRDPIWSTWALHGRAVDQNKVLQFAQQIRQHRFNSSHLEIDDMYTPAYGDFNFDEGKFPNASDMFRRLRDAGFRVTLWVHPFVNYNSSSFGEGVERELFVREPTGRLPALVRWWNGIGAVLDFTHPEAREWFQGHLRRLRLRYNVTSFKFDAGEVSYLPRDFSTYRPLSDPSVWSRRYTEMAEPFFSLAEVRVGYQSQNISCFFRLVDRDSVWGYDLGLRSLIPAVLTVSMLGYPFILPDMIGGNAVPERTAGRQDGPGPERELYVRWLEVAAFMPAMQFSIPPWQYDAEVVAIAHKFAALRASLVAPLLLELAGEITDTGDPIVRPLWWIAPGDETAHRIDSQFLIGDTLLVAPVLEPGKQERDVYLPAGKWRSYKGELFDKTPVLLTDYPVDLDEVAYFTWAS.

Residues 1–11 are compositionally biased toward polar residues; it reads MSQNLQETSQA. The tract at residues 1–26 is disordered; sequence MSQNLQETSQAYPRHRPGSHAGPKSL. Topologically, residues 1–55 are cytoplasmic; sequence MSQNLQETSQAYPRHRPGSHAGPKSLKVTPRATMYTFLPDNFSPAKPKPTKELRP. Residues 56–76 traverse the membrane as a helical; Signal-anchor for type II membrane protein segment; it reads LLCSAVLGLLLVLAAVVAWCY. Residues 77-716 are Extracellular-facing; that stretch reads YSASLRKAER…DEVAYFTWAS (640 aa). Asn239, Asn249, and Asn455 each carry an N-linked (GlcNAc...) asparagine glycan. Active-site residues include Asp462 and Glu465. Asp527 acts as the Proton donor in catalysis.

This sequence belongs to the glycosyl hydrolase 31 family. As to quaternary structure, interacts with IGF2; this interaction is required for IGF2 secretion. As to expression, expressed in brain, liver, spleen, skeletal muscle, heart, lung and kidney. High expression is observed in the cerebellum, specifically in astrocytes. Highly expressed in skeletal muscle (at protein level).

It localises to the nucleus membrane. The protein localises to the endoplasmic reticulum membrane. Its function is as follows. Putative glycosidase. Promotes myogenesis by activating AKT signaling through the maturation and secretion of IGF2. The chain is Myogenesis-regulating glycosidase (Myorg) from Mus musculus (Mouse).